The following is an 82-amino-acid chain: MTFNPNIATHTLEAEGLRCPEPVMMVRKTIRTMLDGEVLLVTADDPSTTRDIPSFCRFMDHQLLGAQIDQLPYQYLIKKGLA.

The active-site Cysteine persulfide intermediate is the Cys-19.

This sequence belongs to the sulfur carrier protein TusA family.

It localises to the cytoplasm. Its function is as follows. Sulfur carrier protein which probably makes part of a sulfur-relay system. This chain is Sulfur carrier protein TusA, found in Vibrio cholerae serotype O1 (strain ATCC 39541 / Classical Ogawa 395 / O395).